The primary structure comprises 355 residues: Protein-tyrosine sulfotransferase 1 (355 aa).

Residues 1 to 8 are Cytoplasmic-facing; sequence MIGKLKQN. Residues 9–25 form a helical; Signal-anchor for type II membrane protein membrane-spanning segment; sequence LLVACLVISSVTVFYLC. Over 26–355 the chain is Lumenal; it reads RHAMDCHHRI…QKSPEKPNPS (330 aa). Asn-55 is a glycosylation site (N-linked (GlcNAc...) asparagine). Residue 76–80 participates in 3'-phosphoadenylyl sulfate binding; sequence RSGTT. Cys-94 and Cys-154 are joined by a disulfide. The active-site Proton donor/acceptor is Glu-97. The interval 99-103 is interaction with peptide substrate; it reads RVIPR. 3'-phosphoadenylyl sulfate contacts are provided by Arg-181, Ser-189, and Arg-193. A disulfide bond links Cys-223 and Cys-230. 3'-phosphoadenylyl sulfate contacts are provided by residues Tyr-235, 282-291, and Lys-297; that span reads STDQVIKPVN. Residues 325 to 355 are disordered; the sequence is HANPPNYGRPDPLVLDNTRRLQKSPEKPNPS. Residues 341-355 are compositionally biased toward basic and acidic residues; it reads NTRRLQKSPEKPNPS.

Belongs to the protein sulfotransferase family.

It is found in the golgi apparatus membrane. The catalysed reaction is L-tyrosyl-[protein] + 3'-phosphoadenylyl sulfate = O-sulfo-L-tyrosine-[protein] + adenosine 3',5'-bisphosphate + H(+). Catalyzes the O-sulfation of tyrosine residues within acidic motifs of polypeptides, using 3'-phosphoadenylyl sulfate (PAPS) as cosubstrate. This is Protein-tyrosine sulfotransferase 1 (tpst1) from Danio rerio (Zebrafish).